The following is a 2422-amino-acid chain: Non-reducing polyketide synthase trt4 (2422 aa).

The interval 14 to 196 (VLFGPKCPKT…HHSDHTSVVQ (183 aa)) is N-terminal acylcarrier protein transacylase domain (SAT). Residues 289-314 (VEPPDSHHNTNTTQDSDVTTNASPLT) are disordered. The span at 297 to 312 (NTNTTQDSDVTTNASP) shows a compositional bias: polar residues. Positions 329-745 (TVPIAVTGMA…GSNAAIVLQE (417 aa)) constitute a Ketosynthase family 3 (KS3) domain. Catalysis depends on for beta-ketoacyl synthase activity residues Cys494, His629, and His668. Positions 856-1121 (LCFGGQTGNT…CPIDLSGPQA (266 aa)) are malonyl-CoA:ACP transacylase (MAT) domain. Ser904 acts as the For acyl/malonyl transferase activity in catalysis. The N-terminal hotdog fold stretch occupies residues 1190 to 1316 (PSLVKLLNND…GKISISSEAN (127 aa)). Positions 1190–1495 (PSLVKLLNND…FTCVSIQSLK (306 aa)) constitute a PKS/mFAS DH domain. Residues 1191-1494 (SLVKLLNNDG…TFTCVSIQSL (304 aa)) form a product template (PT) domain region. The active-site Proton acceptor; for dehydratase activity is the His1221. The C-terminal hotdog fold stretch occupies residues 1345–1495 (SSGLKRSTVY…FTCVSIQSLK (151 aa)). Asp1402 functions as the Proton donor; for dehydratase activity in the catalytic mechanism. The 78-residue stretch at 1535-1612 (SRSEDGLRVV…GLVQRIFPGG (78 aa)) folds into the Carrier domain. Position 1572 is an O-(pantetheine 4'-phosphoryl)serine (Ser1572). The segment at 1615-1636 (AHVETHSQPPDKIGITTGDRMP) is disordered. A methyltransferase (CMeT) domain region spans residues 1774–2007 (QHASEHKLLH…GFNWVDWTDN (234 aa)). Residues 2036–2383 (NAVAEETLVY…LAPHIPTDEY (348 aa)) are thioesterase (TE) domain. Active-site for thioesterase activity residues include Ser2159, Asp2320, and His2352.

It carries out the reaction 3 malonyl-CoA + acetyl-CoA + 2 S-adenosyl-L-methionine = 3,5-dimethylorsellinate + 2 S-adenosyl-L-homocysteine + 3 CO2 + 4 CoA. It functions in the pathway secondary metabolite biosynthesis; terpenoid biosynthesis. Its function is as follows. Non-reducing polyketide synthase; part of the gene cluster that mediates the biosynthesis of terretonin, a fungal meroterpenoid that acts as a mycotoxin. The first step of the pathway is the synthesis of 3,5-dimethylorsellinic acid (DMOA) by the polyketide synthase trt4. DMOA is then prenylated into farnesyl-DMOA by the polyprenyl transferase trt2. Methylation by the methyltransferase trt5 then leads to farnesyl-DMOA methyl ester which is further subject to epoxidation by the FAD-dependent monooxygenase trt8 to yield epoxyfarnesyl-DMOA methyl ester. Cyclization of epoxyfarnesyl-DMOA methyl ester by the terpene cyclase trt1 leads to a tetracycle intermediate which is in turn converted to preterretonin. Dehydrogenase trt9 comes next to transform preterretonin to preterrenoid. The FAD-dependent monooxygenase trt3 is then required for the C-hydroxylation at C16 of preterrenoid to yield terrenoid. The cytochrome P450 trt6 catalyzes three successive oxidations to transform terrenoid into an unstable intermediate, which then undergoes the D-ring expansion and unusual rearrangement of the methoxy group to afford the core skeleton of terretonin. Trt14 catalyzes the D-ring expansion of terretonin involving intramolecular methoxy rearrangement as well as the hydrolysis of the expanded D-ring and the methyl ester moiety. Finally, the nonheme iron-dependent dioxygenase trt7 accomplishes the last two oxidation reactions steps to complete the biosynthesis of terretonin. Terretonin C is produced via spontaneous decarboxylation of the terretonin precursor. Another shunt product of the terretonin biosynthesis is dihydrofarnesyl-DMOA, derived from epoxyfarnesyl-DMOA through hydrolysis of the epoxide. This Aspergillus terreus (strain NIH 2624 / FGSC A1156) protein is Non-reducing polyketide synthase trt4.